We begin with the raw amino-acid sequence, 240 residues long: Splicing factor rtf2 (240 aa).

Disordered regions lie at residues 1–22 (MGND…GKVP) and 181–240 (SLNK…RVKI). Residues 185–210 (ASKKSNKNGDKKRKHVSKSNSKHAKH) are compositionally biased toward basic residues. Basic and acidic residues-rich tracts occupy residues 211–224 (ELRT…ENVK) and 231–240 (DMERVKRVKI).

The protein belongs to the rtf2 family. In terms of assembly, interacts with pcn1.

The protein localises to the nucleus. Its function is as follows. Putative splicing factor that is required for the correct splicing of a subset of pre-mRNAs. Required for the correct splicing of rtf1, a replication termination factor that mediates site-specific replication termination at replication barrier RTS1. This Schizosaccharomyces pombe (strain 972 / ATCC 24843) (Fission yeast) protein is Splicing factor rtf2.